The primary structure comprises 569 residues: Cytosolic purine 5'-nucleotidase (569 aa).

The active-site Nucleophile is the D52. Positions 52 and 54 each coordinate IMP. Mg(2+)-binding residues include D52 and D54. The Proton donor role is filled by D54. 2 residues coordinate ATP: R144 and N154. 7 residues coordinate IMP: R202, D206, K215, T249, N250, S251, and K292. D351 lines the Mg(2+) pocket. ATP-binding residues include Q453 and R456. Residues 527-569 (SISEIKPPNLFPQAPQEITHCHDEDDDEEEEEEEVEEEEEEEE) form a disordered region. Residues 548–569 (HDEDDDEEEEEEEVEEEEEEEE) form a required for tetramer assembly region. The span at 550–569 (EDDDEEEEEEEVEEEEEEEE) shows a compositional bias: acidic residues.

Belongs to the 5'(3')-deoxyribonucleotidase family. In terms of assembly, homotetramer. Mg(2+) is required as a cofactor.

Its subcellular location is the cytoplasm. The protein localises to the cytosol. It catalyses the reaction a ribonucleoside 5'-phosphate + H2O = a ribonucleoside + phosphate. The enzyme catalyses a 2'-deoxyribonucleoside + a ribonucleoside 5'-phosphate = a ribonucleoside + a 2'-deoxyribonucleoside 5'-phosphate. It carries out the reaction IMP + H2O = inosine + phosphate. The catalysed reaction is GMP + H2O = guanosine + phosphate. It catalyses the reaction dGMP + H2O = 2'-deoxyguanosine + phosphate. The enzyme catalyses dIMP + H2O = 2'-deoxyinosine + phosphate. It carries out the reaction XMP + H2O = xanthosine + phosphate. The catalysed reaction is inosine + GMP = guanosine + IMP. It catalyses the reaction dGMP + inosine = 2'-deoxyguanosine + IMP. The enzyme catalyses dIMP + inosine = 2'-deoxyinosine + IMP. It carries out the reaction inosine + UMP = uridine + IMP. The catalysed reaction is inosine + CMP = cytidine + IMP. It catalyses the reaction inosine + AMP = IMP + adenosine. With respect to regulation, allosterically activated by various compounds including ATP, 2,3-BPG/2,3-Bisphosphoglyceric acid and Ap4A/P1,P4-bis(5'-adenosyl) tetraphosphate. Binding of an allosteric activator is a prerequisiste to magnesium and substrate binding. Inhibited by inorganic phosphate. Inhibited by inosine, guanosine, p-chloromercuribenzoate and NaF. Functionally, broad specificity cytosolic 5'-nucleotidase that catalyzes the dephosphorylation of 6-hydroxypurine nucleoside 5'-monophosphates. In addition, possesses a phosphotransferase activity by which it can transfer a phosphate from a donor nucleoside monophosphate to an acceptor nucleoside, preferably inosine, deoxyinosine and guanosine. Has the highest activities for IMP and GMP followed by dIMP, dGMP and XMP. Could also catalyze the transfer of phosphates from pyrimidine monophosphates but with lower efficiency. Through these activities regulates the purine nucleoside/nucleotide pools within the cell. The sequence is that of Cytosolic purine 5'-nucleotidase (NT5C2) from Gallus gallus (Chicken).